Consider the following 122-residue polypeptide: Riboflavin kinase (122 aa).

4–9 is a CDP binding site; sequence GFGEGA. Residues Thr-33 and Asn-35 each contribute to the Mg(2+) site. The FMN site is built by Thr-84 and Glu-92. 97–100 is a binding site for CDP; that stretch reads VNLR.

This sequence belongs to the archaeal riboflavin kinase family. Mg(2+) is required as a cofactor.

The catalysed reaction is riboflavin + CTP = CDP + FMN + H(+). The protein operates within cofactor biosynthesis; FMN biosynthesis; FMN from riboflavin (CTP route): step 1/1. Catalyzes the CTP-dependent phosphorylation of riboflavin (vitamin B2) to form flavin mononucleotide (FMN). The protein is Riboflavin kinase of Methanothermobacter thermautotrophicus (strain ATCC 29096 / DSM 1053 / JCM 10044 / NBRC 100330 / Delta H) (Methanobacterium thermoautotrophicum).